Here is a 531-residue protein sequence, read N- to C-terminus: MDGIVTEVAVGVKRGSDELLSGSVLSSPNSNMSGMVVTANGNDSKKFKGEDKMDGAPSRVLHIRKLPGEVTETEVIALGLPFGKVTNILMLKGKNQAFLELATEEAAITMVNYYSAVTPHLRNQPIYIQYSNHKELKTDNTLNQRAQVVLQAVTAVQTANTPLSGTTVSESAVTPAQSPVLRIIIDNMYYPVTLDVLHQIFSKFGAVLKIITFTKNNQFQALLQYGDPVNAQQAKLALDGQNIYNACCTLRIDFSKLVNLNVKYNNDKSRDYTRPDLPSGDGQPALDPAIAAAFAKETSLLAVPGALSPLAIPNAAAAAAAAAAGRVGMPGVSAGGNTVLLVSNLNEEMVTPQSLFTLFGVYGDVQRVKILYNKKDSALIQMADGNQSQLAMNHLNGQKMYGKIIRVTLSKHQTVQLPREGLDDQGLTKDFGNSPLHRFKKPGSKNFQNIFPPSATLHLSNIPPSVAEEDLRTLFANTGGTVKAFKFFQDHKMALLQMATVEEAIQALIDLHNYNLGENHHLRVSFSKSTI.

M1 carries the post-translational modification N-acetylmethionine. A phosphoserine mark is found at S26 and S27. RRM domains lie at 59–133 (RVLH…YSNH) and 181–257 (LRII…FSKL). Position 308 is a phosphoserine (S308). 2 RRM domains span residues 338-412 (TVLL…LSKH) and 455-529 (ATLH…FSKS).

Monomer. Interacts with NOVA1; the interaction is direct. Identified in a mRNP complex, at least composed of DHX9, DDX3X, ELAVL1, HNRNPU, IGF2BP1, ILF3, PABPC1, PCBP2, PTBP2, STAU1, STAU2, SYNCRIP and YBX1. Part of a ternary complex containing KHSRP and HNRPH1. Interacts with NOVA2; the interaction is direct.

It is found in the nucleus. Functionally, RNA-binding protein which binds to intronic polypyrimidine tracts and mediates negative regulation of exons splicing. May antagonize in a tissue-specific manner the ability of NOVA1 to activate exon selection. In addition to its function in pre-mRNA splicing, plays also a role in the regulation of translation. The sequence is that of Polypyrimidine tract-binding protein 2 from Rattus norvegicus (Rat).